A 223-amino-acid chain; its full sequence is Putative 3-methyladenine DNA glycosylase (223 aa).

This sequence belongs to the DNA glycosylase MPG family.

This Pseudomonas savastanoi pv. phaseolicola (strain 1448A / Race 6) (Pseudomonas syringae pv. phaseolicola (strain 1448A / Race 6)) protein is Putative 3-methyladenine DNA glycosylase.